The chain runs to 144 residues: Maximins 3/H5 (144 aa).

Residues 1 to 18 form the signal peptide; it reads MNFKYIFAVSFLIASAYA. 2 propeptides span residues 19–43 and 74–123; these read RSVQ…REIR and TAEE…KEKR. Position 143 is a leucine amide (Leu143).

Belongs to the bombinin family. In terms of tissue distribution, expressed by the skin glands.

Its subcellular location is the secreted. Maximin-3 shows antibacterial activity against both Gram-positive and Gram-negative bacteria. It also shows antimicrobial activity against the fungus C.albicans, but not against A.flavus nor P.uticale. It has little hemolytic activity. It possess a significant cytotoxicity against tumor cell lines. It possess a significant anti-HIV activity. It shows high spermicidal activity. In terms of biological role, maximin-H5 shows antibacterial activity only against the Gram-positive bacteria S.aureus. The other bacterial and fungal strains tested were resistant to it. The presence of metal ions, like Zn(2+) and Mg(2+), did not increase its antimicrobial potency. Does not show hemolytic activity (in a concentration up to 80 uM). The sequence is that of Maximins 3/H5 from Bombina maxima (Giant fire-bellied toad).